Reading from the N-terminus, the 190-residue chain is MRNTIKSTNSLAGYFLVSTLQMPDSRFAGQVVYVCSHNSNGALGLVINKPDCNLSFAQVLREMGMEVSRAELPSVYIGGPVSLDAAFVLYRSHPYEGNHIDITDNISLSREKELLELVVGENSSRNYLFLVGYVGWESGQLELELRDNSWLVVPGDEQVIFDLPDGEKWKAAAAYYGIDITTFNENLGYA.

This sequence belongs to the UPF0301 (AlgH) family.

The sequence is that of UPF0301 protein DP2218 from Desulfotalea psychrophila (strain LSv54 / DSM 12343).